The following is a 532-amino-acid chain: Developmental and secondary metabolism regulator ve1 (532 aa).

A Velvet domain is found at 26–220; that stretch reads NRSLWYQLTV…ADQGCRVRIR (195 aa). Positions 40–45 match the Nuclear localization signal motif; the sequence is ERARAC. Residues 217-229 are compositionally biased toward basic residues; it reads VRIRRDVRMRKRD. Disordered regions lie at residues 217 to 440 and 458 to 520; these read VRIR…TEPS and PQVD…RADG. A compositionally biased stretch (low complexity) spans 233–250; it reads GGNNNNNNNAGNNAGNNG. Basic and acidic residues-rich tracts occupy residues 251-260 and 283-294; these read FERREEDFGR and SEHRASYSDVSR. Residues 302–317 are compositionally biased toward pro residues; it reads YPPPPPPPPSYDPTPS. The span at 397–411 shows a compositional bias: low complexity; sequence STSTYVPPSPSVYST. Residues 435 to 463 are PEST; the sequence is MNTEPSRGSIKISALVEPMPVIEPQVDPL. Residues 481–493 are compositionally biased toward polar residues; sequence FAQNTRPLFNGQR.

The protein belongs to the velvet family. VeA subfamily. In terms of assembly, component of the heterotrimeric velvet complex composed of laeA, ve1 and velB; Ve1 acting as a bridging protein between laeA and velB. Interacts directly with laeA and velB.

It is found in the nucleus. The protein resides in the cytoplasm. Component of the velvet transcription factor complex that controls sexual/asexual developmental ratio in response to light, promoting sexual development in the darkness while stimulating asexual sporulation under illumination. The velvet complex hat acts as a global regulator for secondary metabolite gene expression. Controls the expression of the aurofusarin and trichothecene gene clusters. Also controls the expression of the deoxynivalenol (DON) gene cluster. Regulates hyphal growth and pigment formation. Acts as a positive regulator of virulence. This is Developmental and secondary metabolism regulator ve1 from Gibberella zeae (strain ATCC MYA-4620 / CBS 123657 / FGSC 9075 / NRRL 31084 / PH-1) (Wheat head blight fungus).